Reading from the N-terminus, the 442-residue chain is UDP-N-acetylmuramate--L-alanine ligase (442 aa).

An ATP-binding site is contributed by 109-115; the sequence is GAHGKTS.

The protein belongs to the MurCDEF family.

Its subcellular location is the cytoplasm. The catalysed reaction is UDP-N-acetyl-alpha-D-muramate + L-alanine + ATP = UDP-N-acetyl-alpha-D-muramoyl-L-alanine + ADP + phosphate + H(+). It participates in cell wall biogenesis; peptidoglycan biosynthesis. Functionally, cell wall formation. In Streptococcus pyogenes serotype M28 (strain MGAS6180), this protein is UDP-N-acetylmuramate--L-alanine ligase.